Consider the following 573-residue polypeptide: Putative adenine deaminase PTO1085 (573 aa).

This sequence belongs to the metallo-dependent hydrolases superfamily. Adenine deaminase family.

The enzyme catalyses adenine + H2O + H(+) = hypoxanthine + NH4(+). This chain is Putative adenine deaminase PTO1085, found in Picrophilus torridus (strain ATCC 700027 / DSM 9790 / JCM 10055 / NBRC 100828 / KAW 2/3).